We begin with the raw amino-acid sequence, 353 residues long: Rhodopsin (353 aa).

The Extracellular portion of the chain corresponds to 1 to 36; it reads MNGTEGPFFYVPMVNTTGIVRSPYDYPQYYLVSPAA. 2 N-linked (GlcNAc...) asparagine glycosylation sites follow: Asn-2 and Asn-15. Residues 37-61 form a helical membrane-spanning segment; sequence YAALGAYMFLLILLGFPINFLTLYV. At 62-73 the chain is on the cytoplasmic side; it reads TIEHKKLRTPLN. The chain crosses the membrane as a helical span at residues 74-96; sequence YILLNLAVADLFMVFGGFTTTMY. Topologically, residues 97–110 are extracellular; that stretch reads TSMHGYFVLGRLGC. Cysteines 110 and 187 form a disulfide. Residues 111–133 traverse the membrane as a helical segment; sequence NMEGFFATLGGEIGLWSLVVLAV. The 'Ionic lock' involved in activated form stabilization signature appears at 134–136; sequence ERW. The Cytoplasmic portion of the chain corresponds to 134 to 152; it reads ERWLVVCKPISNFRFGENH. The chain crosses the membrane as a helical span at residues 153-173; it reads AIMGLAFTWVMACSCAVPPLV. Residues 174-202 are Extracellular-facing; sequence GWSRYIPEGMQCSCGVDYYTRAEGFNNES. A glycan (N-linked (GlcNAc...) asparagine) is linked at Asn-200. A helical transmembrane segment spans residues 203-224; it reads FVIYMFACHFIIPMCVVFFCYG. Over 225–252 the chain is Cytoplasmic; that stretch reads RLLCAVKEAAAAQQESETTQRAEKEVTR. Residues 253–274 traverse the membrane as a helical segment; sequence MVVIMGIAFLICWCPYASVAWY. Residues 275–286 are Extracellular-facing; that stretch reads IFTHQGSEFGPV. The helical transmembrane segment at 287–308 threads the bilayer; sequence FMTLPAFFAKTSSVYNPLIYIL. Residue Lys-296 is modified to N6-(retinylidene)lysine. Over 309 to 353 the chain is Cytoplasmic; it reads MNKQFRHCMITTLCCGKNPFEEEEGASTASKTEASSVSSSSVSPA. Residues Cys-322 and Cys-323 are each lipidated (S-palmitoyl cysteine). The interval 331–353 is disordered; sequence EEGASTASKTEASSVSSSSVSPA. The segment covering 334 to 353 has biased composition (low complexity); it reads ASTASKTEASSVSSSSVSPA.

The protein belongs to the G-protein coupled receptor 1 family. Opsin subfamily. Post-translationally, phosphorylated on some or all of the serine and threonine residues present in the C-terminal region. In terms of processing, contains one covalently linked retinal chromophore.

Its subcellular location is the membrane. It is found in the cell projection. The protein resides in the cilium. The protein localises to the photoreceptor outer segment. Photoreceptor required for image-forming vision at low light intensity. While most salt water fish species use retinal as chromophore, most freshwater fish use 3-dehydroretinal, or a mixture of retinal and 3-dehydroretinal. Light-induced isomerization of 11-cis to all-trans retinal triggers a conformational change that activates signaling via G-proteins. Subsequent receptor phosphorylation mediates displacement of the bound G-protein alpha subunit by arrestin and terminates signaling. This chain is Rhodopsin (rho), found in Dicentrarchus labrax (European seabass).